The sequence spans 186 residues: Ribosome maturation factor RimM (186 aa).

In terms of domain architecture, PRC barrel spans 93–168 (EDDFYLVDLI…VLIDPPQEEN (76 aa)). The segment at 163–186 (PPQEENAPEFGRNELGHDDGGEAA) is disordered. Residues 173-186 (GRNELGHDDGGEAA) are compositionally biased toward basic and acidic residues.

This sequence belongs to the RimM family. Binds ribosomal protein uS19.

Its subcellular location is the cytoplasm. In terms of biological role, an accessory protein needed during the final step in the assembly of 30S ribosomal subunit, possibly for assembly of the head region. Essential for efficient processing of 16S rRNA. May be needed both before and after RbfA during the maturation of 16S rRNA. It has affinity for free ribosomal 30S subunits but not for 70S ribosomes. The polypeptide is Ribosome maturation factor RimM (Granulibacter bethesdensis (strain ATCC BAA-1260 / CGDNIH1)).